Reading from the N-terminus, the 464-residue chain is MNLRPVIVGGGSAGMAAAIELARRGVPCVLFDEASRPGGVVYRGPLRAGVDPAYLGARYTRMLEKLRRDFSACAGHIDLRLNSRVVGGDGQRLMVLDEAERLHEVEYSHLLLATGCHERSVPFPGWTLPGVMLLGGLQLQIKSGVVKPLGDTLIAGSGPLLPLVACQLHAAGVRVAGVYEACAFGRMARESLALLNKPQLFLDGLSMLGYLKLNGIPLHYGWGVVEASGDGELTEVTVAPYDEEWRPDLENARPVKASTLAVGYGFIPRTQLSQQLGLEHGFSDDGYLRAECNVWQQSSQPHIHLAGDMAGIRGGEAAMIGGRIAALSILLQREAIAPAEAIERRESHLARLEAIKRFRAGVERYTQRGARQVELARADTVICRCEQVTRGDIERALEQGVQDIAGLKMRTRAGMGDCQGRMCIGYCSDRLRRATGRHDVGWLRPRFPIDPIPFSAFQNLGTEA.

Heterotrimer of HcnA, HcnB and HcnC.

The protein localises to the cell membrane. It catalyses the reaction glycine + 2 A = hydrogen cyanide + 2 AH2 + CO2. With respect to regulation, oxygen is necessary for cyanogenesis. Activated by succinate, glycine methyl ester, glucose and D,L-methionine in addition to glycine. Phenazine methosulfate, methylene blue, 2,6-dichlorophenolindophenol (DCIP) and ferricyanide can replace oxygen for the reaction. Inhibited by pyrrolnitrin and acriflavine at 1 mM concentration. Functionally, a three-component membrane-bound flavoenzyme that catalyzes the formation of hydrogen cyanide, a secondary metabolite, by transfer of electrons to a cyanide-resistant branch of the aerobic respiratory chain. The protein is Hydrogen cyanide synthase subunit HcnB of Pseudomonas aeruginosa (strain ATCC 15692 / DSM 22644 / CIP 104116 / JCM 14847 / LMG 12228 / 1C / PRS 101 / PAO1).